Consider the following 123-residue polypeptide: uncharacterized protein (123 aa).

The stretch at 36–76 forms a coiled coil; it reads VDRQENKKEFLSAEEAREKFKELINQVRSWKEQMSTLSKYA.

This is an uncharacterized protein from Aquifex aeolicus (strain VF5).